Here is a 228-residue protein sequence, read N- to C-terminus: LexA repressor (228 aa).

Positions 26–46 (FDEMKDALDLRSKSGIHRLIT) form a DNA-binding region, H-T-H motif. Residues Ser-149 and Lys-187 each act as for autocatalytic cleavage activity in the active site.

This sequence belongs to the peptidase S24 family. As to quaternary structure, homodimer.

The enzyme catalyses Hydrolysis of Ala-|-Gly bond in repressor LexA.. Represses a number of genes involved in the response to DNA damage (SOS response), including recA and lexA. In the presence of single-stranded DNA, RecA interacts with LexA causing an autocatalytic cleavage which disrupts the DNA-binding part of LexA, leading to derepression of the SOS regulon and eventually DNA repair. The polypeptide is LexA repressor (Cereibacter sphaeroides (strain ATCC 17025 / ATH 2.4.3) (Rhodobacter sphaeroides)).